The primary structure comprises 402 residues: Dihydrolipoyllysine-residue acetyltransferase component of pyruvate dehydrogenase complex (402 aa).

The Lipoyl-binding domain occupies 2 to 77; sequence ANEFKFTDVG…HIGQVMAVID (76 aa). Lys43 is modified (N6-lipoyllysine). Disordered regions lie at residues 82–110 and 143–172; these read AAAP…APVT and PQPT…PSGE. Composition is skewed to pro residues over residues 87–107 and 143–162; these read APQP…PTPA and PQPT…PTPA. Residue His374 is part of the active site.

The protein belongs to the 2-oxoacid dehydrogenase family. As to quaternary structure, forms a 24-polypeptide structural core with octahedral symmetry. (R)-lipoate serves as cofactor.

It carries out the reaction N(6)-[(R)-dihydrolipoyl]-L-lysyl-[protein] + acetyl-CoA = N(6)-[(R)-S(8)-acetyldihydrolipoyl]-L-lysyl-[protein] + CoA. Functionally, the pyruvate dehydrogenase complex catalyzes the overall conversion of pyruvate to acetyl-CoA and CO(2). It contains multiple copies of three enzymatic components: pyruvate dehydrogenase (E1), dihydrolipoamide acetyltransferase (E2) and lipoamide dehydrogenase (E3). This Mycoplasma pneumoniae (strain ATCC 29342 / M129 / Subtype 1) (Mycoplasmoides pneumoniae) protein is Dihydrolipoyllysine-residue acetyltransferase component of pyruvate dehydrogenase complex (pdhC).